The primary structure comprises 821 residues: Dapper homolog 1 (821 aa).

Positions 88–136 form a coiled coil; it reads LNTEEKLLEENILLLRKQLNCLRRRDAGLINQLQELDRQISDLRLDTET. 4 disordered regions span residues 288–312, 386–432, 564–615, and 627–655; these read SKPG…SSWH, QDAS…STTN, NSAS…KTKR, and ERHT…VLAK. A compositionally biased stretch (low complexity) spans 388–400; the sequence is ASATSTEPSTASP. Polar residues predominate over residues 401-432; sequence QRQWSAESKGGTPQNGAYLSSSQPQNSYSTTN. Composition is skewed to basic residues over residues 584–593, 601–615, and 639–649; these read DKHRTGSRRT, HLHK…KTKR, and AQRHHGHHRHH. Residues 818-821 carry the PDZ-binding motif; the sequence is MTTV.

The protein belongs to the dapper family. As to quaternary structure, interacts with dvl2.

The protein localises to the cytoplasm. Its function is as follows. Involved in regulation of intracellular signaling pathways during development. Specifically thought to play a role in canonical and/or non-canonical Wnt signaling pathways through interaction with DSH (Dishevelled) family proteins. Binds to dvl2 and may regulate the degradation of ctnnb1/beta-catenin, thereby modulating the transcriptional activation of target genes of the Wnt signaling pathway. Seems to activate the canonical Wnt signaling pathway. This chain is Dapper homolog 1 (dact1), found in Danio rerio (Zebrafish).